A 115-amino-acid chain; its full sequence is Tyrosine-protein phosphatase 22 (115 aa).

The 115-residue stretch at 1 to 115 (WLMIVEQKCR…ETGGDAPMVV (115 aa)) folds into the Tyrosine-protein phosphatase domain. Substrate is bound at residue Asp83.

It belongs to the protein-tyrosine phosphatase family.

The catalysed reaction is O-phospho-L-tyrosyl-[protein] + H2O = L-tyrosyl-[protein] + phosphate. This chain is Tyrosine-protein phosphatase 22 (STY-22), found in Styela plicata (Wrinkled sea squirt).